Reading from the N-terminus, the 235-residue chain is Class B acid phosphatase (235 aa).

The first 22 residues, 1–22 (MKNLVKLSLIAMLTAATLPAMA), serve as a signal peptide directing secretion. The active-site Nucleophile is the Asp67. Positions 67 and 69 each coordinate Mg(2+). The Proton donor role is filled by Asp69. Substrate-binding positions include 135 to 136 (TG) and Lys175. Asp190 is a Mg(2+) binding site.

The protein belongs to the class B bacterial acid phosphatase family. Homotetramer. Mg(2+) is required as a cofactor.

Its subcellular location is the periplasm. The catalysed reaction is a phosphate monoester + H2O = an alcohol + phosphate. Functionally, dephosphorylates several organic phosphate monoesters. Also has a phosphotransferase activity catalyzing the transfer of low-energy phosphate groups from organic phosphate monoesters to free hydroxyl groups of various organic compounds. This Aggregatibacter actinomycetemcomitans serotype C (strain D11S-1) (Actinobacillus actinomycetemcomitans) protein is Class B acid phosphatase.